The sequence spans 535 residues: MQAFKKKLQQLVYSFSTEDRYADYDEEAANPDVAAGVERSITESNHGSQIQLADYVDGSNPSGNEGINEALLAWRHIDNWTSQHNPDLAATLSDPCTRHDINNAEKDLDIIFPASVRASLRLHDGQEDLVSMTGTGGLFFGLQLMGLDEIVQMTRTWRNVAENLERKNHELQIKMDKHQELNGTTVDLPNQQKGYGKLENQDYKAMDPNLQRNISQNYKKQFKLPDIPDQHSVPPLAIQQVYANSGWIPLVTDNAGNHIGIDLAPGPKGKYGQVILFGREFDTKFVVASNWGDFLLSFANDLELGNWLLIDEGNDQFAGEGELVFRDKKSNGPVRDYLEVLVMRSRMKWNSFTERKLPEEPKRTVSSSQGSQNTVEPAEQQETALTVDETLDEKNDTSLSVDNTGTKQEVKDPETTGTKTGSSAKAEDNLPKTSNPDEVMADGADTQETSKHEQNESTNAVENTETSQEGAVETSEKPEEKPKKQSKKASKKKGKKDEKKDTDSKTKEPEVEEETESHLANSVEKLKDDFENVAL.

Residues 354-363 show a composition bias toward basic and acidic residues; the sequence is ERKLPEEPKR. The disordered stretch occupies residues 354-535; that stretch reads ERKLPEEPKR…LKDDFENVAL (182 aa). Composition is skewed to polar residues over residues 364 to 384, 397 to 407, and 456 to 469; these read TVSS…QETA, TSLSVDNTGTK, and ESTN…TSQE. Positions 474 to 483 are enriched in basic and acidic residues; the sequence is TSEKPEEKPK. Residues 484 to 494 show a composition bias toward basic residues; the sequence is KQSKKASKKKG. Basic and acidic residues-rich tracts occupy residues 495–509 and 524–535; these read KKDE…TKEP and EKLKDDFENVAL.

This sequence belongs to the KNR4/SMI1 family.

This is KNR4/SMI1 homolog from Kluyveromyces lactis (strain ATCC 8585 / CBS 2359 / DSM 70799 / NBRC 1267 / NRRL Y-1140 / WM37) (Yeast).